A 429-amino-acid polypeptide reads, in one-letter code: Glutamyl-tRNA reductase (429 aa).

Residues 49–52 (TCNR), serine 107, 112–114 (EPQ), and glutamine 118 contribute to the substrate site. Cysteine 50 functions as the Nucleophile in the catalytic mechanism. 187-192 (GAGETI) is a binding site for NADP(+).

Belongs to the glutamyl-tRNA reductase family. Homodimer.

The catalysed reaction is (S)-4-amino-5-oxopentanoate + tRNA(Glu) + NADP(+) = L-glutamyl-tRNA(Glu) + NADPH + H(+). It participates in porphyrin-containing compound metabolism; protoporphyrin-IX biosynthesis; 5-aminolevulinate from L-glutamyl-tRNA(Glu): step 1/2. Catalyzes the NADPH-dependent reduction of glutamyl-tRNA(Glu) to glutamate 1-semialdehyde (GSA). The sequence is that of Glutamyl-tRNA reductase from Pseudomonas fluorescens (strain SBW25).